The primary structure comprises 227 residues: MKILMIEDNVSVCTMTEMFFFKEGFEAEFVHDGLEGYQRFTEENWDLIILDIMLPSMDGVTICRKIRETSTVPIIMLTAKDTESDQVIGFEMGADDYVTKPFSPLTLVARIKAVIRRYKATGKAVIDEDMIETECFTINKKTREVLLNGEPVENLTPKEFDLLYYLVQNPRQVFSREQLLEQVWGYQFYGDERTVDVHIKRLRKKLASEDKPFLYTVWGVGYKFDED.

A Response regulatory domain is found at 2–115; that stretch reads KILMIEDNVS…TLVARIKAVI (114 aa). Asp-51 carries the post-translational modification 4-aspartylphosphate. Positions 128-226 form a DNA-binding region, ompR/PhoB-type; that stretch reads EDMIETECFT…VWGVGYKFDE (99 aa).

Post-translationally, phosphorylated by YclK.

It is found in the cytoplasm. Functionally, could be member of the two-component regulatory system YclK/YclJ. This is an uncharacterized protein from Bacillus subtilis (strain 168).